We begin with the raw amino-acid sequence, 501 residues long: Putative matrix metalloproteinase (501 aa).

The N-terminal stretch at 1-26 (MMPQYERKQIIIHISCVIICVVVTLT) is a signal peptide. 6 N-linked (GlcNAc...) asparagine; by host glycosylation sites follow: asparagine 48, asparagine 58, asparagine 61, asparagine 94, asparagine 116, and asparagine 163. A Zn(2+)-binding site is contributed by histidine 179. Residue glutamate 180 is part of the active site. Histidine 183 and histidine 189 together coordinate Zn(2+). N-linked (GlcNAc...) asparagine; by host glycosylation is found at asparagine 192, asparagine 267, asparagine 280, and asparagine 291. A Hemopexin repeat occupies 311-356 (TGHIDTISVIRGELYIFVDEYHWRFRSNGLLYSGYPLKTTHSWSVP). N-linked (GlcNAc...) asparagine; by host glycans are attached at residues asparagine 379 and asparagine 493.

This sequence belongs to the peptidase M10A family. Zn(2+) is required as a cofactor.

This Trichoplusia ni ascovirus 2c (TnAV-2c) protein is Putative matrix metalloproteinase.